The primary structure comprises 162 residues: UPF0260 protein CC_3276 (162 aa).

It belongs to the UPF0260 family.

The polypeptide is UPF0260 protein CC_3276 (Caulobacter vibrioides (strain ATCC 19089 / CIP 103742 / CB 15) (Caulobacter crescentus)).